A 475-amino-acid chain; its full sequence is Chemotaxis protein MotD (475 aa).

Disordered regions lie at residues 1–175, 195–243, and 408–475; these read MRPL…PVGG, LQPE…SEPD, and GDSA…HVYM. Polar residues predominate over residues 9–22; it reads RTSAASRPAQSLSV. Positions 79-100 are enriched in low complexity; it reads ADVPASMADAASPDARPASERA. Over residues 143–155 the composition is skewed to basic and acidic residues; sequence HSRETVHALRDAI. Residues 408 to 417 are compositionally biased toward gly residues; the sequence is GDSASGGGGQ. Over residues 427-449 the composition is skewed to basic and acidic residues; that stretch reads EGRERAGDDGQGRQPRDGGRAAT.

The protein resides in the cytoplasm. In terms of biological role, required for the rotation of the flagellar motor. Has a positive effect as flagellar rotation increases when an excess of motd is present. In Rhizobium meliloti (Ensifer meliloti), this protein is Chemotaxis protein MotD (motD).